Consider the following 998-residue polypeptide: Methyl sulfide methyltransferase-associated sensor (998 aa).

The 38-residue stretch at 40 to 77 (FGYSPKDFISGGLGYADIIYPADLEIAVSQFFSYVEKD) folds into the PAS 1 domain. Residues 117–169 (FTQQYRLLNKSGDVLWVEAEIKVLEEEEGKAGLFQVTVFDISRWKHTEKAMPA) form the PAC 1 domain. Residues 209–246 (LGYTPEDFTSGRIVYTDIIHPDDLDNVRAEVSKNTEEG) form the PAS 2 domain. A PAC 2 domain is found at 250–302 (FSKEYRVLAKSGEVRYVDERTLIRRNEKGEITCYQGILLDITQRKEAEELILS). The region spanning 314–458 (ASLDEVLLLL…NAYLAGIAIE (145 aa)) is the GAF 1 domain. A PAS 3 domain is found at 469–540 (SENRFRTIFD…ENMQKIKAEG (72 aa)). Residues 609–752 (ASLKEITDFA…LMQGMWQLIQ (144 aa)) enclose the GAF 2 domain. C656 provides a ligand contact to heme. The Histidine kinase domain maps to 783–998 (EFVEEMMFPE…GNLMHVKLPK (216 aa)).

Requires heme as cofactor. Autophosphorylates: autophosphorylation is dependent on the redox state of heme cofactor and is promoted upon reduction.

Its subcellular location is the cytoplasm. The catalysed reaction is ATP + protein L-histidine = ADP + protein N-phospho-L-histidine.. Functionally, heme-binding sensor kinase component part of a two-component regulatory system involved in methyl sulfide metabolism. Does not act as a phytochrome-like photoreceptor. The polypeptide is Methyl sulfide methyltransferase-associated sensor (msmS) (Methanosarcina acetivorans (strain ATCC 35395 / DSM 2834 / JCM 12185 / C2A)).